Consider the following 449-residue polypeptide: MAHPVMTFDKPSSASPKISFVSLGCPKALVDSERIITRLRAEGYELTKSHRGADAVIVNTCGFLDSAKAESLAAIGEAAAENGKIIVTGCMGAEPESLQTAYPDLFAITGPQAYESVMEAVHAAIAPPDNPFTELVPPQGIKLTPRHYAYLKISEGCNNRCSFCIIPHLRGDLVSRPIGEILQEAEKLVSAGVKEILVVSQDTSAYGVDLKYAETLYGDRTLRSKFIDLARELGSLGVWVRLHYIYPYPHVDAVLDLMAEGKILPYLDIPFQHASRNVLRAMRRPGDQEKTLSRIEEWRKLCPDLTLRSTFIVGFPGETEDDFQILLDWLSEAKLDRVGAFKYEPVADAPANDLDLTPVAPEVQTRRYQRFMEHQQKISARRLREKIGKHVSVIIDEASPKAAIGRTKGDAPSIDGKVHITTHRPLRVGDIVKVKIEAADAYDLHGKAV.

Positions 16–126 constitute an MTTase N-terminal domain; the sequence is PKISFVSLGC…VMEAVHAAIA (111 aa). Cys25, Cys61, Cys90, Cys157, Cys161, and Cys164 together coordinate [4Fe-4S] cluster. A Radical SAM core domain is found at 143–381; the sequence is LTPRHYAYLK…MEHQQKISAR (239 aa). In terms of domain architecture, TRAM spans 384–449; it reads REKIGKHVSV…DAYDLHGKAV (66 aa).

It belongs to the methylthiotransferase family. RimO subfamily. The cofactor is [4Fe-4S] cluster.

Its subcellular location is the cytoplasm. The enzyme catalyses L-aspartate(89)-[ribosomal protein uS12]-hydrogen + (sulfur carrier)-SH + AH2 + 2 S-adenosyl-L-methionine = 3-methylsulfanyl-L-aspartate(89)-[ribosomal protein uS12]-hydrogen + (sulfur carrier)-H + 5'-deoxyadenosine + L-methionine + A + S-adenosyl-L-homocysteine + 2 H(+). Functionally, catalyzes the methylthiolation of an aspartic acid residue of ribosomal protein uS12. The protein is Ribosomal protein uS12 methylthiotransferase RimO of Beijerinckia indica subsp. indica (strain ATCC 9039 / DSM 1715 / NCIMB 8712).